Reading from the N-terminus, the 265-residue chain is Shikimate dehydrogenase (NADP(+)) (265 aa).

Residues 15–17 (SLS) and Thr62 contribute to the shikimate site. Lys66 acts as the Proton acceptor in catalysis. Positions 87 and 102 each coordinate shikimate. NADP(+) is bound by residues 125–129 (GAGGA), 149–154 (NRTLEK), and Leu209. Position 211 (Tyr211) interacts with shikimate. Gly233 provides a ligand contact to NADP(+).

The protein belongs to the shikimate dehydrogenase family. Homodimer.

It catalyses the reaction shikimate + NADP(+) = 3-dehydroshikimate + NADPH + H(+). It participates in metabolic intermediate biosynthesis; chorismate biosynthesis; chorismate from D-erythrose 4-phosphate and phosphoenolpyruvate: step 4/7. Its function is as follows. Involved in the biosynthesis of the chorismate, which leads to the biosynthesis of aromatic amino acids. Catalyzes the reversible NADPH linked reduction of 3-dehydroshikimate (DHSA) to yield shikimate (SA). This Legionella pneumophila (strain Lens) protein is Shikimate dehydrogenase (NADP(+)).